Consider the following 372-residue polypeptide: Glutamate 5-kinase (372 aa).

Lys-14 contacts ATP. Ser-54, Asp-141, and Asn-153 together coordinate substrate. 173 to 174 contributes to the ATP binding site; the sequence is TD. A PUA domain is found at 280–358; it reads RGHVVIDAGA…GEIETVLGYM (79 aa).

The protein belongs to the glutamate 5-kinase family.

The protein resides in the cytoplasm. The enzyme catalyses L-glutamate + ATP = L-glutamyl 5-phosphate + ADP. It participates in amino-acid biosynthesis; L-proline biosynthesis; L-glutamate 5-semialdehyde from L-glutamate: step 1/2. Functionally, catalyzes the transfer of a phosphate group to glutamate to form L-glutamate 5-phosphate. The chain is Glutamate 5-kinase from Burkholderia vietnamiensis (strain G4 / LMG 22486) (Burkholderia cepacia (strain R1808)).